The sequence spans 500 residues: Cytochrome P450 2D26 (500 aa).

A Phosphoserine modification is found at S249. C446 lines the heme pocket.

It belongs to the cytochrome P450 family. Requires heme as cofactor.

It localises to the endoplasmic reticulum membrane. The protein localises to the microsome membrane. The enzyme catalyses an organic molecule + reduced [NADPH--hemoprotein reductase] + O2 = an alcohol + oxidized [NADPH--hemoprotein reductase] + H2O + H(+). Functionally, cytochromes P450 are a group of heme-thiolate monooxygenases. In liver microsomes, this enzyme is involved in an NADPH-dependent electron transport pathway. It oxidizes a variety of structurally unrelated compounds, including steroids, fatty acids, and xenobiotics. The sequence is that of Cytochrome P450 2D26 from Mus musculus (Mouse).